The chain runs to 447 residues: tRNA-2-methylthio-N(6)-dimethylallyladenosine synthase (447 aa).

An MTTase N-terminal domain is found at 3–120 (KKLYIKTNGC…LPALLNERLE (118 aa)). Cys12, Cys49, Cys83, Cys157, Cys161, and Cys164 together coordinate [4Fe-4S] cluster. The Radical SAM core domain maps to 143–375 (RAEGPTAFVS…QNRLLMNAAR (233 aa)). The TRAM domain maps to 378 to 441 (ESMIGSKQKI…PNSLRGRLLE (64 aa)).

Belongs to the methylthiotransferase family. MiaB subfamily. In terms of assembly, monomer. The cofactor is [4Fe-4S] cluster.

Its subcellular location is the cytoplasm. The enzyme catalyses N(6)-dimethylallyladenosine(37) in tRNA + (sulfur carrier)-SH + AH2 + 2 S-adenosyl-L-methionine = 2-methylsulfanyl-N(6)-dimethylallyladenosine(37) in tRNA + (sulfur carrier)-H + 5'-deoxyadenosine + L-methionine + A + S-adenosyl-L-homocysteine + 2 H(+). Its function is as follows. Catalyzes the methylthiolation of N6-(dimethylallyl)adenosine (i(6)A), leading to the formation of 2-methylthio-N6-(dimethylallyl)adenosine (ms(2)i(6)A) at position 37 in tRNAs that read codons beginning with uridine. In Legionella pneumophila (strain Paris), this protein is tRNA-2-methylthio-N(6)-dimethylallyladenosine synthase.